Consider the following 184-residue polypeptide: Casparian strip membrane protein 3 (184 aa).

Over 1–22 the chain is Cytoplasmic; sequence MEGSGEHGETSKGPLSKGVSRG. Residues 23–43 form a helical membrane-spanning segment; that stretch reads LCILDLIFRVIAVIGTLASAI. At 44–72 the chain is on the extracellular side; the sequence is AMGTTNQTMPFFTQFVQFKERYSDLPTLT. Asn-49 carries N-linked (GlcNAc...) asparagine glycosylation. The helical transmembrane segment at 73 to 93 threads the bilayer; that stretch reads FFVVANSIASAYLIISLPLSI. Residues 94–105 lie on the Cytoplasmic side of the membrane; that stretch reads VHIIRSRAKYSR. Residues 106–126 form a helical membrane-spanning segment; the sequence is LILIFFDVAMLALVTAAASAG. Topologically, residues 127–159 are extracellular; sequence AAIVYLAHNGNVSANWFAICQQFDSFCERISGS. N-linked (GlcNAc...) asparagine glycosylation is present at Asn-137. Residues 160 to 180 traverse the membrane as a helical segment; that stretch reads LIGSFAAMVVLILLILLSAVA. Residues 181–184 are Cytoplasmic-facing; that stretch reads LARR.

Belongs to the Casparian strip membrane proteins (CASP) family. In terms of assembly, homodimer and heterodimers.

The protein localises to the cell membrane. Its function is as follows. Regulates membrane-cell wall junctions and localized cell wall deposition. Required for establishment of the Casparian strip membrane domain (CSD) and the subsequent formation of Casparian strips, a cell wall modification of the root endodermis that determines an apoplastic barrier between the intraorganismal apoplasm and the extraorganismal apoplasm and prevents lateral diffusion. The chain is Casparian strip membrane protein 3 from Brachypodium distachyon (Purple false brome).